A 215-amino-acid chain; its full sequence is MASATLTAWIKMPSFLKKILKLRGRRQEEESRSRMLSDSSMLSCRVNQLTSEGTEAGSTTPSTLPKDQALPIEPKVRAKEKSQHRRPKIIDQVRRVESLGEQASQRQKHMLETLINKIYTGPLGEELVQTLYLRIWAMEETPESLKILQMREDIRDQVLKMKTERWLRTLIRGEKTKLKDFQKRYEEVHPYLMKEKVEQVIMEEAWSLAAHIVQE.

Disordered regions lie at residues 12-34 and 51-71; these read MPSFLKKILKLRGRRQEEESRSR and SEGTEAGSTTPSTLPKDQALP. An involved in self-degradation and in host STAT1 degradation region spans residues 15–22; it reads FLKKILKL. Positions 51 to 65 are enriched in polar residues; sequence SEGTEAGSTTPSTLP.

Belongs to the respirovirus protein C family. As to quaternary structure, the different isoforms interact (via C-terminus) with unphosphorylated and phosphorylated human STAT1 (via N-terminus), favoring the formation of parallel STAT1 homodimers. The different isoforms do not interact with host STAT2. C protein interacts with L protein; this interaction has an inhibitory effect on viral transcription and replication. In terms of processing, Y1 and Y2 proteins are produced not only by alternative initiation, but also by proteolytic cleavage of C'. Only alternative initiation is detected in vitro, whereas in vivo cleavage seems to be predominant.

It localises to the host cytoplasm. Functionally, the different products prevent the establishment of cellular antiviral state by blocking the interferon-alpha/beta (IFN-alpha/beta) and IFN-gamma signaling pathways. They inhibit IFN-alpha/beta induced tyrosine phosphorylation of STAT1 and STAT2. Blocking the IFN-alpha/beta pathway requires binding to STAT1 in the cytoplasm. They inhibit IFN-gamma induced serine phosphorylation of STAT1. Block the IFN-gamma pathway by binding to and stabilizing the parallel form of the STAT1 dimer, further inducing high-molecular-weight complex formation and inhibition of transcription by IFN-gamma. May also have a role in preventing the cell to enter apoptosis. Modulate regulation of viral transcription and replication. Overexpression inhibits the viral RNA polymerase. The absence of all C', C, Y1 and Y2 proteins leads to viral delayed growth. Plays an important role in virion particles release. Modulates virion shape. This chain is Protein C' (P/V/C), found in Sendai virus (strain Harris) (SeV).